Here is a 419-residue protein sequence, read N- to C-terminus: UDP-N-acetylglucosamine 1-carboxyvinyltransferase 2 (419 aa).

24–25 (KN) provides a ligand contact to phosphoenolpyruvate. R94 serves as a coordination point for UDP-N-acetyl-alpha-D-glucosamine. C118 serves as the catalytic Proton donor. Position 118 is a 2-(S-cysteinyl)pyruvic acid O-phosphothioketal (C118). Residues 123–127 (RPIDQ), D307, and I329 contribute to the UDP-N-acetyl-alpha-D-glucosamine site.

It belongs to the EPSP synthase family. MurA subfamily.

It localises to the cytoplasm. The catalysed reaction is phosphoenolpyruvate + UDP-N-acetyl-alpha-D-glucosamine = UDP-N-acetyl-3-O-(1-carboxyvinyl)-alpha-D-glucosamine + phosphate. It functions in the pathway cell wall biogenesis; peptidoglycan biosynthesis. Its function is as follows. Cell wall formation. Adds enolpyruvyl to UDP-N-acetylglucosamine. This chain is UDP-N-acetylglucosamine 1-carboxyvinyltransferase 2, found in Staphylococcus aureus (strain MSSA476).